A 70-amino-acid polypeptide reads, in one-letter code: Phycobilisome 8.1 kDa linker polypeptide, phycocyanin-associated, rod (70 aa).

The region spanning 5–63 is the CpcD-like domain; that stretch reads SRSFQVEVSGLHQNEVTNQNNYPIRSSGSVFITIPFSRFNEELQRINRLGGKIVNIQPL.

The protein belongs to the phycobilisome linker protein family.

It localises to the cellular thylakoid membrane. Its function is as follows. Rod linker protein, associated with phycocyanin. Linker polypeptides determine the state of aggregation and the location of the disk-shaped phycobiliprotein units within the phycobilisome and modulate their spectroscopic properties in order to mediate a directed and optimal energy transfer. This Microchaete diplosiphon (Fremyella diplosiphon) protein is Phycobilisome 8.1 kDa linker polypeptide, phycocyanin-associated, rod (cpcD3).